The chain runs to 88 residues: Large ribosomal subunit protein bL31B (88 aa).

The protein belongs to the bacterial ribosomal protein bL31 family. Type B subfamily. Part of the 50S ribosomal subunit.

The chain is Large ribosomal subunit protein bL31B from Pasteurella multocida (strain Pm70).